A 105-amino-acid chain; its full sequence is Pyruvate synthase subunit PorD (105 aa).

4Fe-4S ferredoxin-type domains follow at residues 44-73 (FKPE…LDEE) and 74-103 (GYPV…MVRE). [4Fe-4S] cluster is bound by residues Cys53, Cys56, Cys59, Cys63, Cys83, Cys86, Cys89, and Cys93.

As to quaternary structure, heterotetramer of one alpha, one beta, one delta and one gamma chain. [4Fe-4S] cluster serves as cofactor.

The chain is Pyruvate synthase subunit PorD (porD) from Pyrococcus furiosus (strain ATCC 43587 / DSM 3638 / JCM 8422 / Vc1).